The sequence spans 438 residues: uncharacterized protein (438 aa).

The next 12 helical transmembrane spans lie at 22-42 (VSPIVALTITPIVFALIGGFG), 59-79 (SAALLLFAILFFGILIDAGLF), 89-109 (IVKGDPVKIAIGSAVLAMLIA), 137-157 (MVMATLAMLSLSIVSGMTPWG), 174-194 (FFVPLLPTMLGGIACVIFLAF), 237-257 (LIYLNLFLVISIMVFIVLGTK), 258-278 (HPSVLFLIGFVLALTINYPNV), 292-312 (AITVVLLVFSAGVFAGILSGT), 330-350 (MGGFFPVIVALTSIPFTFVLS), 356-376 (FGMVPIFAEAASAYGIEPVEI), 380-400 (SIMGQPVHLMSPLVASTVLLV), and 418-438 (AVITSLVITLLAIITGAITIL).

Belongs to the CitM (TC 2.A.11) transporter family.

Its subcellular location is the cell membrane. Its function is as follows. Transports the free citrate anion. This is an uncharacterized protein from Bacillus subtilis (strain 168).